We begin with the raw amino-acid sequence, 457 residues long: Argininosuccinate lyase (457 aa).

Belongs to the lyase 1 family. Argininosuccinate lyase subfamily.

It is found in the cytoplasm. The catalysed reaction is 2-(N(omega)-L-arginino)succinate = fumarate + L-arginine. It participates in amino-acid biosynthesis; L-arginine biosynthesis; L-arginine from L-ornithine and carbamoyl phosphate: step 3/3. The protein is Argininosuccinate lyase of Shigella boydii serotype 18 (strain CDC 3083-94 / BS512).